Reading from the N-terminus, the 257-residue chain is NAD kinase (257 aa).

Residue Asp46 is the Proton acceptor of the active site. Residues 46–47, 116–117, Asp146, Ala154, 157–162, and Asn218 contribute to the NAD(+) site; these read DG, NE, and TAYNLS.

It belongs to the NAD kinase family. Requires a divalent metal cation as cofactor.

The protein localises to the cytoplasm. It catalyses the reaction NAD(+) + ATP = ADP + NADP(+) + H(+). Functionally, involved in the regulation of the intracellular balance of NAD and NADP, and is a key enzyme in the biosynthesis of NADP. Catalyzes specifically the phosphorylation on 2'-hydroxyl of the adenosine moiety of NAD to yield NADP. In Brucella suis biovar 1 (strain 1330), this protein is NAD kinase.